Consider the following 94-residue polypeptide: Large ribosomal subunit protein bL27 (94 aa).

The propeptide occupies 1-9 (MLKLNLQFF).

This sequence belongs to the bacterial ribosomal protein bL27 family. In terms of processing, the N-terminus is cleaved by ribosomal processing cysteine protease Prp.

This is Large ribosomal subunit protein bL27 from Staphylococcus haemolyticus (strain JCSC1435).